A 115-amino-acid chain; its full sequence is Thiosulfate:glutathione sulfurtransferase (115 aa).

The Rhodanese domain maps to 17-115 (ASGRARLFDV…AYREWLEKES (99 aa)). The Cysteine persulfide intermediate role is filled by C79.

In terms of tissue distribution, highly expressed in kidney, liver and skeletal muscle. Lower levels of expression in heart, colon, thymus, spleen, placenta and lung. Weakly expressed in brain, small intestine and peripheral blood leukocytes. Expressed at high levels in the breast carcinoma cell lines MCF-7 and MDA-MB-468 and at a lower level in the breast carcinoma cell line MDA-MB-231, the colon carcinoma call line LoVo and the lung carcinoma cell line A-549. No expression in the cell lines EFO-27 and HeLa, or the normal breast tissue cell lines MCF-10A and H184A1. Detected in invasive ductal carcinoma, but not in the adjacent tissues.

It is found in the cytoplasm. Its subcellular location is the perinuclear region. The catalysed reaction is thiosulfate + glutathione = S-sulfanylglutathione + sulfite + H(+). It catalyses the reaction thiosulfate + 2 glutathione = glutathione disulfide + hydrogen sulfide + sulfite + 2 H(+). Its activity is regulated as follows. GSS(-) is a potent inhibitor of TSTD1, since the presence of the sulfur dioxygenase (SDO) strongly increases the TSTD1 catalytic activity. Thiosulfate:glutathione sulfurtransferase (TST) required to produce S-sulfanylglutathione (GSS(-)), a central intermediate in hydrogen sulfide metabolism. Provides the link between the first step in mammalian H(2)S metabolism performed by the sulfide:quinone oxidoreductase (SQOR) which catalyzes the conversion of H(2)S to thiosulfate, and the sulfur dioxygenase (SDO) which uses GSS(-) as substrate. The thermodynamic coupling of the irreversible SDO and reversible TST reactions provides a model for the physiologically relevant reaction with thiosulfate as the sulfane donor. GSS(-) spontaneously reacts with glutathione to form glutathione disulfide. In Homo sapiens (Human), this protein is Thiosulfate:glutathione sulfurtransferase (TSTD1).